A 1338-amino-acid chain; its full sequence is P-type sodium-transporting ATPase4 (1338 aa).

Residues 1-106 are disordered; it reads MAARASADKL…KSISSVSQMH (106 aa). Residues 55–69 are compositionally biased toward basic and acidic residues; sequence AEEKVAGHDGESPRR. A compositionally biased stretch (polar residues) spans 91–104; the sequence is GHSQLGKSISSVSQ. 8 helical membrane-spanning segments follow: residues 229–249, 255–275, 418–438, 456–476, 985–1005, 1068–1088, 1261–1281, and 1288–1308; these read IFIQ…AIAS, WVEG…ATYM, LGGM…VVAI, IVLV…PMVV, FVCF…IAIA, IFEA…CTGV, MHLA…VPGI, and CALP…NLIL.

It belongs to the cation transport ATPase (P-type) (TC 3.A.3) family.

It localises to the cell membrane. It catalyses the reaction Na(+)(in) + ATP + H2O = Na(+)(out) + ADP + phosphate + H(+). With respect to regulation, inhibited by cipargamin, a synthetic spiroindolone. Inhibited by pyrazoleamide PA21A050, structurally unrelated to the spiroindolones. Inhibited by (+)-SJ733, a dihydroisoquinolone compound. In terms of biological role, sodium-exporting ATPase. Required for the extrusion of Na(+) from the parasites to maintain a low cytosolic concentration of Na(+). Required for maintaining the viability of extracellular parasites but not for intracellular growth, egress or invasion. Involved in parasite virulence. This chain is P-type sodium-transporting ATPase4, found in Toxoplasma gondii (strain ATCC 50861 / VEG).